The chain runs to 163 residues: MMSVRLMLVVAVWLCLRVDASQDVMKNLSMNFAKPLEDCKKEMDLPDSVTTDFYNFWKEGYEFTNRHTGCAILCLSSKLELLDQEMKLHHGKAQEFAKKHGADDAMAKQLVDMIHGCSQSTPDATDDPCMKALNVAKCFKAKIHELNWAPSMELVVGEVLAEV.

Residues 1-22 form the signal peptide; sequence MMSVRLMLVVAVWLCLRVDASQ. 3 disulfides stabilise this stretch: cysteine 39–cysteine 74, cysteine 70–cysteine 129, and cysteine 117–cysteine 138.

This sequence belongs to the PBP/GOBP family. Antenna.

In terms of biological role, this major soluble protein in olfactory sensilla of male moths might serve to solubilize the extremely hydrophobic pheromone molecules and to transport pheromone through the aqueous lymph to receptors located on olfactory cilia. The protein is Pheromone-binding protein of Heliothis virescens (Tobacco budworm moth).